A 302-amino-acid chain; its full sequence is Sulfate adenylyltransferase subunit 2 (302 aa).

The protein belongs to the PAPS reductase family. CysD subfamily. Heterodimer composed of CysD, the smaller subunit, and CysN.

It catalyses the reaction sulfate + ATP + H(+) = adenosine 5'-phosphosulfate + diphosphate. Its pathway is sulfur metabolism; hydrogen sulfide biosynthesis; sulfite from sulfate: step 1/3. With CysN forms the ATP sulfurylase (ATPS) that catalyzes the adenylation of sulfate producing adenosine 5'-phosphosulfate (APS) and diphosphate, the first enzymatic step in sulfur assimilation pathway. APS synthesis involves the formation of a high-energy phosphoric-sulfuric acid anhydride bond driven by GTP hydrolysis by CysN coupled to ATP hydrolysis by CysD. This Escherichia coli O1:K1 / APEC protein is Sulfate adenylyltransferase subunit 2.